The primary structure comprises 21 residues: Dart gland peptide (21 aa).

The disordered stretch occupies residues 1–21; that stretch reads SINNTGGSGNRRLDKNGFAGQ. Asn3 carries an N-linked (GlcNAc...) asparagine glycan.

Its subcellular location is the secreted. The protein is Dart gland peptide of Cornu aspersum (Brown garden snail).